The chain runs to 314 residues: MTRKNYTSLTEFVLLGLADTLELQIILFLFFLVIYTLTVLGNLGMILLIRIDSQLHTPMYFFLANLSFVDVCNSTTITPKMLADLLSEKKTISFAGCFLQMYFFISLATTECILFGLMAYDRYAAICRPLLYSLIMSRTVYLKMAAGAFAAGLLNFMVNTSHVSSLSFCDSNVIHHFFCDSPPLFKLSCSDTILKESISSILAGVNIVGTLLVILSSYSYVLFSIFSMHSGEGRHRAFSTCASHLTAIILFYATCIYTYLRPSSSYSLNQDKVASVFYTVVIPMLNPLIYSLRSKEVKKALANVISRKRTSSFL.

The Extracellular portion of the chain corresponds to 1–25 (MTRKNYTSLTEFVLLGLADTLELQI). N-linked (GlcNAc...) asparagine glycosylation occurs at Asn5. Residues 26-46 (ILFLFFLVIYTLTVLGNLGMI) form a helical membrane-spanning segment. Over 47-54 (LLIRIDSQ) the chain is Cytoplasmic. A helical membrane pass occupies residues 55–75 (LHTPMYFFLANLSFVDVCNST). Residues 76–99 (TITPKMLADLLSEKKTISFAGCFL) are Extracellular-facing. Cysteines 97 and 189 form a disulfide. A helical membrane pass occupies residues 100–120 (QMYFFISLATTECILFGLMAY). Over 121–139 (DRYAAICRPLLYSLIMSRT) the chain is Cytoplasmic. A helical membrane pass occupies residues 140 to 160 (VYLKMAAGAFAAGLLNFMVNT). The Extracellular portion of the chain corresponds to 161-196 (SHVSSLSFCDSNVIHHFFCDSPPLFKLSCSDTILKE). The helical transmembrane segment at 197-217 (SISSILAGVNIVGTLLVILSS) threads the bilayer. Residues 218–237 (YSYVLFSIFSMHSGEGRHRA) are Cytoplasmic-facing. Residues 238–258 (FSTCASHLTAIILFYATCIYT) traverse the membrane as a helical segment. Over 259-271 (YLRPSSSYSLNQD) the chain is Extracellular. The helical transmembrane segment at 272–292 (KVASVFYTVVIPMLNPLIYSL) threads the bilayer. Topologically, residues 293-314 (RSKEVKKALANVISRKRTSSFL) are cytoplasmic.

The protein belongs to the G-protein coupled receptor 1 family.

The protein localises to the cell membrane. Functionally, odorant receptor. The chain is Olfactory receptor 5F1 (OR5F1) from Homo sapiens (Human).